A 173-amino-acid chain; its full sequence is Translation initiation factor IF-3 (173 aa).

This sequence belongs to the IF-3 family. Monomer.

The protein localises to the cytoplasm. Functionally, IF-3 binds to the 30S ribosomal subunit and shifts the equilibrium between 70S ribosomes and their 50S and 30S subunits in favor of the free subunits, thus enhancing the availability of 30S subunits on which protein synthesis initiation begins. In Methylobacterium sp. (strain 4-46), this protein is Translation initiation factor IF-3.